We begin with the raw amino-acid sequence, 644 residues long: MFQDNPLLAQLKQQLHSQTPRAEGVVKATEKGFGFLEVDAQKSYFIPPPQMKKVMHGDRIIAVIHSEKERESAEPEELVEPFLTRFVGKVQGKNDRLAIVPDHPLLKDAIPCRAARGLNHEFKEGDWAVAEMRRHPLKGDRSFYAELTQYITFGDDHFVPWWVTLARHNLEKEAPDGVATEMLDEGLVREDLTALDFVTIDSASTEDMDDALFAKALPDDKLQLIVAIADPTAWIAEGSKLDKAAKIRAFTNYLPGFNIPMLPRELSDDLCSLRANEVRPVLACRMTLSADGTIEDNIEFFAATIESKAKLVYDQVSDWLENTGDWQPESEAIAEQVRLLAQICQRRGEWRHNHALVFKDRPDYRFILGEKGEVLDIVAEPRRIANRIVEEAMIAANICAARVLRDKLGFGIYNVHMGFDPANADALAALLKTHGLHVDAEEVLTLDGFCKLRRELDAQPTGFLDSRIRRFQSFAEISTEPGPHFGLGLEAYATWTSPIRKYGDMINHRLLKAVIKGETATRPQDEITVQMAERRRLNRMAERDVGDWLYARFLKDKAGTDTRFAAEIVDISRGGMRVRLVDNGAIAFIPAPFLHAMRDELVCSQENGTVQIKGETVYKVTDVIDVTIAEVRMETRSIIARPVA.

Residues 189-516 (REDLTALDFV…NHRLLKAVIK (328 aa)) enclose the RNB domain. An S1 motif domain is found at 561 to 643 (DTRFAAEIVD…ETRSIIARPV (83 aa)).

Belongs to the RNR ribonuclease family. RNase II subfamily.

It is found in the cytoplasm. It catalyses the reaction Exonucleolytic cleavage in the 3'- to 5'-direction to yield nucleoside 5'-phosphates.. Functionally, involved in mRNA degradation. Hydrolyzes single-stranded polyribonucleotides processively in the 3' to 5' direction. The sequence is that of Exoribonuclease 2 from Escherichia coli O8 (strain IAI1).